Reading from the N-terminus, the 60-residue chain is Lantibiotic Pep5 (60 aa).

A propeptide spanning residues 1–26 (MKNNKNLFDLEIKKETSQNTDELEPQ) is cleaved from the precursor. The tract at residues 1–29 (MKNNKNLFDLEIKKETSQNTDELEPQTAG) is disordered. Thr-27 bears the 2-oxobutanoic acid mark. The segment at residues 35-39 (SVKQC) is a cross-link (lanthionine (Ser-Cys)). 2,3-didehydrobutyrine is present on residues Thr-42 and Thr-46. Residues 50-53 (TVSC) constitute a cross-link (beta-methyllanthionine (Thr-Cys)). The segment at residues 52 to 59 (SCKGKNGC) is a cross-link (lanthionine (Ser-Cys)).

It belongs to the type A lantibiotic family. Post-translationally, maturation of lantibiotics involves the enzymatic conversion of Thr, and Ser into dehydrated AA and the formation of thioether bonds with cysteine. This is followed by membrane translocation and cleavage of the modified precursor. After proteolysis of the propeptide, the N-terminal 2,3-didehydrobutyrine hydrolyzes to 2-oxobutanoic acid, possibly spontaneously.

Lanthionine-containing peptide antibiotic (lantibiotic) active on Gram-positive bacteria. The bactericidal activity of lantibiotics is based on depolarization of energized bacterial cytoplasmic membranes, initiated by the formation of aqueous transmembrane pores. This is Lantibiotic Pep5 (pepA) from Staphylococcus epidermidis.